The chain runs to 185 residues: Peptidyl-tRNA hydrolase (185 aa).

A tRNA-binding site is contributed by Tyr-14. Catalysis depends on His-19, which acts as the Proton acceptor. Phe-64, Asn-66, and Asn-112 together coordinate tRNA.

This sequence belongs to the PTH family. Monomer.

The protein localises to the cytoplasm. It catalyses the reaction an N-acyl-L-alpha-aminoacyl-tRNA + H2O = an N-acyl-L-amino acid + a tRNA + H(+). Its function is as follows. Hydrolyzes ribosome-free peptidyl-tRNAs (with 1 or more amino acids incorporated), which drop off the ribosome during protein synthesis, or as a result of ribosome stalling. Catalyzes the release of premature peptidyl moieties from peptidyl-tRNA molecules trapped in stalled 50S ribosomal subunits, and thus maintains levels of free tRNAs and 50S ribosomes. The protein is Peptidyl-tRNA hydrolase of Caldanaerobacter subterraneus subsp. tengcongensis (strain DSM 15242 / JCM 11007 / NBRC 100824 / MB4) (Thermoanaerobacter tengcongensis).